The chain runs to 642 residues: Zinc finger protein 14 (642 aa).

The 73-residue stretch at Val4 to Lys76 folds into the KRAB domain. The interval Gly77–Gly99 is disordered. A compositionally biased stretch (polar residues) spans Gly81 to Gly99. The C2H2-type 1 zinc finger occupies His103–His125. Residues Cys141–His163 form a C2H2-type 2; degenerate zinc finger. The segment at Tyr169 to His191 adopts a C2H2-type 3 zinc-finger fold. The C2H2-type 4; atypical zinc-finger motif lies at Tyr197–His217. 15 consecutive C2H2-type zinc fingers follow at residues Tyr223–His245, Tyr251–His273, Tyr279–His301, Tyr307–His329, Tyr335–His357, Tyr363–His385, Tyr391–His413, Tyr419–His441, Tyr447–His469, Tyr475–His497, Tyr503–His525, Phe531–His553, Tyr559–His581, Tyr587–His609, and Tyr615–His637.

It belongs to the krueppel C2H2-type zinc-finger protein family.

The protein localises to the nucleus. May be involved in transcriptional regulation. The sequence is that of Zinc finger protein 14 (ZNF14) from Macaca fascicularis (Crab-eating macaque).